We begin with the raw amino-acid sequence, 190 residues long: Peptidyl-tRNA hydrolase (190 aa).

A tRNA-binding site is contributed by F14. The active-site Proton acceptor is the H19. Residues M64, N66, and N112 each coordinate tRNA.

It belongs to the PTH family. As to quaternary structure, monomer.

The protein resides in the cytoplasm. The catalysed reaction is an N-acyl-L-alpha-aminoacyl-tRNA + H2O = an N-acyl-L-amino acid + a tRNA + H(+). Its function is as follows. Hydrolyzes ribosome-free peptidyl-tRNAs (with 1 or more amino acids incorporated), which drop off the ribosome during protein synthesis, or as a result of ribosome stalling. Functionally, catalyzes the release of premature peptidyl moieties from peptidyl-tRNA molecules trapped in stalled 50S ribosomal subunits, and thus maintains levels of free tRNAs and 50S ribosomes. The polypeptide is Peptidyl-tRNA hydrolase (Staphylococcus haemolyticus (strain JCSC1435)).